Reading from the N-terminus, the 466-residue chain is GVGFKAGVKDYKLTYYTPDYETLDTDILAAFRVTPQPGVPAEEAGAAVAAESSTGTWTTVWTDGLTSLDRYKGRCYHIEPVAGEDNQYIVYVAYPLDLFEEGSVTNMFTSIVGNVFGFKALRALRLEDLRIPPAYSKTFQGPPHGIQVERDKLNKYGRPLLGCTTKPKLGLSAKNYGRAVYECLRGGLDFTKDDENVNSQPFMRWRDRFLFCAEAIYKAQAXTGEIKGHYLNATAGTCEEMIKRAAFASELGVPIVMHDYLTGGFTANTSLSHYCRNHGLLLHIHRAMHAVIDRQKNHGIHFRVLAKALRLSGGDHIHSGTVVGKLEGERDITLGFVDLLRDDYIEKDRSRGIYFTQFWVSLPGVLPVASGGIHVWHMPALTEIFGDDSVLQFGGGTLGHPWGNAPGAVANRVALEACVQARNEGQDLAREGNEIIRKASKWSPELAAACEVWKEIKFVFEAMDTL.

At K5 the chain carries N6,N6,N6-trimethyllysine. Substrate-binding residues include N114 and T164. K166 functions as the Proton acceptor in the catalytic mechanism. Residue K168 participates in substrate binding. Residues K192, D194, and E195 each contribute to the Mg(2+) site. At K192 the chain carries N6-carboxylysine. Catalysis depends on H285, which acts as the Proton acceptor. Substrate contacts are provided by R286, H318, and S370.

The protein belongs to the RuBisCO large chain family. Type I subfamily. Heterohexadecamer of 8 large chains and 8 small chains; disulfide-linked. The disulfide link is formed within the large subunit homodimers. Mg(2+) serves as cofactor. The disulfide bond which can form in the large chain dimeric partners within the hexadecamer appears to be associated with oxidative stress and protein turnover.

It localises to the plastid. The protein localises to the chloroplast. The enzyme catalyses 2 (2R)-3-phosphoglycerate + 2 H(+) = D-ribulose 1,5-bisphosphate + CO2 + H2O. It catalyses the reaction D-ribulose 1,5-bisphosphate + O2 = 2-phosphoglycolate + (2R)-3-phosphoglycerate + 2 H(+). Its function is as follows. RuBisCO catalyzes two reactions: the carboxylation of D-ribulose 1,5-bisphosphate, the primary event in carbon dioxide fixation, as well as the oxidative fragmentation of the pentose substrate in the photorespiration process. Both reactions occur simultaneously and in competition at the same active site. The protein is Ribulose bisphosphate carboxylase large chain of Drosera peltata (Pale sundew).